Reading from the N-terminus, the 630-residue chain is A-type voltage-gated potassium channel KCND2 (630 aa).

Topologically, residues 1–184 (MAAGVAAWLP…FENPHTSTMA (184 aa)) are cytoplasmic. An interaction with KCNIP1, KCNIP2, and other family members region spans residues 2–20 (AAGVAAWLPFARAAAIGWM). Position 38 is a phosphothreonine (Thr38). The segment at 71–90 (ERDFFYHPETQQYFFDRDPD) is interaction with KCNIP1. Residues His105, Cys111, Cys132, and Cys133 each coordinate Zn(2+). Residues 185–206 (LVFYYVTGFFIAVSVIANVVET) form a helical membrane-spanning segment. Topologically, residues 207 to 226 (VPCGSSPGHIKELPCGERYA) are extracellular. The helical transmembrane segment at 227 to 249 (VAFFCLDTACVMIFTVEYLLRLA) threads the bilayer. Residues 250–256 (AAPSRYR) are Cytoplasmic-facing. Residues 257–281 (FVRSVMSIIDVVAILPYYIGLVMTD) form a helical membrane-spanning segment. The Extracellular portion of the chain corresponds to 282–287 (NEDVSG). Residues 288–307 (AFVTLRVFRVFRIFKFSRHS) traverse the membrane as a helical; Voltage-sensor segment. The Cytoplasmic portion of the chain corresponds to 308 to 321 (QGLRILGYTLKSCA). The tract at residues 308–321 (QGLRILGYTLKSCA) is S4-S5 linker. A helical transmembrane segment spans residues 322 to 345 (SELGFLLFSLTMAIIIFATVMFYA). The Extracellular portion of the chain corresponds to 346 to 357 (EKGSSASKFTSI). Residues 358–369 (PAAFWYTIVTMT) constitute an intramembrane region (helical). Residues Thr370, Leu371, Gly372, and Tyr373 each coordinate K(+). The Selectivity filter signature appears at 370 to 375 (TLGYGD). An intramembrane segment occupies 370–377 (TLGYGDMV). Topologically, residues 378 to 380 (PKT) are extracellular. The helical transmembrane segment at 381–403 (IAGKIFGSICSLSGVLVIALPVP) threads the bilayer. Topologically, residues 404-630 (VIVSNFSRIY…GGNIVRVSAL (227 aa)) are cytoplasmic. Ser438 bears the Phosphoserine mark. Residues 474 to 489 (FETQHHHLLHCLEKTT) form a required for dendritic targeting region. An important for normal channel activation and inactivation, for interaction with KCNIP2, and probably other family members as well region spans residues 474 to 630 (FETQHHHLLH…GGNIVRVSAL (157 aa)). A phosphoserine mark is found at Ser548, Ser552, Ser572, and Ser575. A disordered region spans residues 600 to 623 (IPTPPVTTPEGDDRPESPEYSGGN). Phosphothreonine occurs at positions 602 and 607. At Ser616 the chain carries Phosphoserine. The short motif at 627-630 (VSAL) is the PDZ-binding element.

This sequence belongs to the potassium channel family. D (Shal) (TC 1.A.1.2) subfamily. Kv4.2/KCND2 sub-subfamily. Homotetramer or heterotetramer with KCND1 or KCND3. Associates with the regulatory subunits KCNIP2, KCNIP3 and KCNIP4. Interacts with the regulatory subunit KCNIP1; this interaction mediates the capture of both the N- and C-terminus of KCND2, preventing N-type inactivation and stabilizing the S6 conformation, thereby accelerating closed state inactivation and recovery. Interacts with DPP10, DLG4 and DLG1. In vivo, probably exists as heteromeric complex containing variable proportions of KCND1, KCND2, KCND3, KCNIP1, KCNIP2, KCNIP3, KCNIP4, DPP6 and DPP10. The tetrameric channel can associate with up to four regulatory subunits, such as KCNIP2 or KCNIP4. Interaction with KCNIP3 promotes tetramerization and formation of a functional potassium channel. Interaction with four KCNIP4 chains does not reduce interaction with DPP10. Probably part of a complex consisting of KCNIP1, KCNIP2 isoform 3 and KCND2. Interacts with FLNA and FLNC. Interacts with NCS1/FREQ. Identified in a complex with cAMP-dependent protein kinase (PKA), CAV3, AKAP6 and KCND3 in cardiac myocytes. Interacts (via S1 and S2 helices) with DPP6; this interaction stabilizes the conformation of the S1-S2 helices and facilitates S4 conformational change, including S4 sliding up and down, thereby accelerating activation, inactivation, and recovery. In terms of processing, phosphorylation at Ser-438 in response to MAPK activation is increased in stimulated dendrites. Interaction with KCNIP2 and DPP6 propomtes phosphorylation by PKA at Ser-552. Phosphorylation at Ser-552 has no effect on interaction with KCNIP3, but is required for the regulation of channel activity by KCNIP3. Phosphorylation at Ser-552 leads to KCND2 internalization. Phosphorylated by MAPK in response to signaling via the metabotropic glutamate receptor GRM5. Phosphorylation at Ser-616 is required for the down-regulation of neuronal A-type currents in response to signaling via GRM5. As to expression, detected in brain cortex, hippocampus, dentate gyrus, thalamus and cerebellum. Detected in neurons from the primary visual cortex. Detected in the supraoptic nucleus in hypothalamus, in hippocampus and the habenular nucleus of the thalamus. Detected in the bed nucleus of the stria terminalis. Detected in dendritic fields in the hippocampus CA1 layer, in stratum radiatum, stratum oriens, stratum lacunosum-moleculare and stratum pyramidale. Detected in dendritic fields in the hippocampus CA3 layer and in dentate gyrus. Detected in the cerebellum granule cell layer, where it localizes at synapses. Detected in the main olfactory bulb, especially in the granule cell layer and the external plexiform layer, but also the mitral layer. Detected in heart atrium and ventricle. Detected in heart left ventricle (at protein level). Highly expressed in heart and throughout the brain, with similar levels in cortex and hypothalamus, and much higher levels in hippocampus, dentate gyrus and the habenular nucleus of the thalamus. Detected in brain, and at lower levels in heart atrium and ventricle. Detected in neurons from the bed nucleus of the stria terminalis. Detected in aorta, cardiac and smooth muscle.

The protein localises to the cell membrane. It is found in the cell projection. It localises to the dendrite. Its subcellular location is the synapse. The protein resides in the perikaryon. The protein localises to the postsynaptic cell membrane. It is found in the dendritic spine. It localises to the sarcolemma. Its subcellular location is the cell junction. The protein resides in the membrane. The protein localises to the caveola. The catalysed reaction is K(+)(in) = K(+)(out). With respect to regulation, inhibited by 5 mM 4-aminopyridine (4-AP). Not inhibited by dendrotoxins and by tetraethylammonium (TEA). Inhibited by 10 mM flecainide and 20 mM quinidine. Inhibited by the heteropodatoxins HpTx(1), HpTx(2), and HpTx(3). Voltage-gated potassium channel that mediates transmembrane potassium transport in excitable membranes, primarily in the brain, but also in rodent heart. Mediates the major part of the dendritic A-type current I(SA) in brain neurons. This current is activated at membrane potentials that are below the threshold for action potentials. It regulates neuronal excitability, prolongs the latency before the first spike in a series of action potentials, regulates the frequency of repetitive action potential firing, shortens the duration of action potentials and regulates the back-propagation of action potentials from the neuronal cell body to the dendrites. Contributes to the regulation of the circadian rhythm of action potential firing in suprachiasmatic nucleus neurons, which regulates the circadian rhythm of locomotor activity. Functions downstream of the metabotropic glutamate receptor GRM5 and plays a role in neuronal excitability and in nociception mediated by activation of GRM5. Mediates the transient outward current I(to) in rodent heart left ventricle apex cells, but not in human heart, where this current is mediated by another family member. Forms tetrameric potassium-selective channels through which potassium ions pass in accordance with their electrochemical gradient. The channel alternates between opened and closed conformations in response to the voltage difference across the membrane. Can form functional homotetrameric channels and heterotetrameric channels that contain variable proportions of KCND2 and KCND3; channel properties depend on the type of pore-forming alpha subunits that are part of the channel. In vivo, membranes probably contain a mixture of heteromeric potassium channel complexes. Interaction with specific isoforms of the regulatory subunits KCNIP1, KCNIP2, KCNIP3 or KCNIP4 strongly increases expression at the cell surface and thereby increases channel activity; it modulates the kinetics of channel activation and inactivation, shifts the threshold for channel activation to more negative voltage values, shifts the threshold for inactivation to less negative voltages and accelerates recovery after inactivation. Likewise, interaction with DPP6 or DPP10 promotes expression at the cell membrane and regulates both channel characteristics and activity. Upon depolarization, the channel goes from a resting closed state (C state) to an activated but non-conducting state (C* state), from there, the channel may either inactivate (I state) or open (O state). The protein is A-type voltage-gated potassium channel KCND2 of Rattus norvegicus (Rat).